The primary structure comprises 454 residues: NEDD8-activating enzyme E1 catalytic subunit (454 aa).

Ala-2 is modified (N-acetylalanine). 56 to 80 (GLGCELLKDLALSGFRNLEVIDMDR) contacts ATP. The active-site Glycyl thioester intermediate is Cys-215.

The protein belongs to the ubiquitin-activating E1 family. UBA3 subfamily. In terms of assembly, heterodimer of UBA3/ECR1 and AXR1. Interacts with NEDD8 and RCE1. As to expression, expressed in shoot, root and floral meristems, in vascular tissues of cotyledons and mature leaves, and in the stele of the root.

Its subcellular location is the nucleus. It carries out the reaction ATP + [NEDD8 protein] + [E1 NEDD8-activating enzyme]-L-cysteine = AMP + diphosphate + [E1 NEDD8-activating enzyme]-S-[NEDD8 protein]-yl-L-cysteine.. It participates in protein modification; protein neddylation. Its function is as follows. Catalytic subunit of the dimeric ECR1-AXR1 E1 enzyme. E1 activates NEDD8/RUB1 by first adenylating its C-terminal glycine residue with ATP, thereafter linking this residue to the side chain of the catalytic cysteine, yielding a NEDD8-ECR1 thioester and free AMP. E1 finally transfers NEDD8 to the catalytic cysteine of RCE1. This is NEDD8-activating enzyme E1 catalytic subunit (ECR1) from Arabidopsis thaliana (Mouse-ear cress).